The following is a 355-amino-acid chain: Heavy metal-associated isoprenylated plant protein 7 (355 aa).

The span at 1-58 shows a compositional bias: basic and acidic residues; sequence MGEEEKKPEAAEEKKMEEKKPEEKKEGEDKKVDAEKKGEDSDKKPQEGESNKDSKEDS. The interval 1 to 74 is disordered; sequence MGEEEKKPEA…APAPPPPPQE (74 aa). Over residues 63–73 the composition is skewed to pro residues; sequence PEAPAPPPPPQ. 2 consecutive HMA domains span residues 72–136 and 170–234; these read PQEV…HRQV and VVTV…KHAA. Residues cysteine 83 and cysteine 86 each contribute to the a metal cation site. The tract at residues 132–157 is disordered; that stretch reads THRQVQLLSPIPPPPPPPEKKAEEDK. Residues cysteine 181 and cysteine 184 each contribute to the a metal cation site. The tract at residues 235 to 308 is disordered; that stretch reads IMKIDPPPPP…GGGEEEGKVV (74 aa). The segment covering 254–293 has biased composition (basic and acidic residues); sequence EGEKKEEEKGEGESKGEEGKDDKAKTDEEKKEGDGGKGEG. At cysteine 352 the chain carries Cysteine methyl ester. Cysteine 352 is lipidated: S-farnesyl cysteine. A propeptide spans 353–355 (removed in mature form); it reads TVM.

This sequence belongs to the HIPP family. In terms of processing, efficiently farnesylated in vitro.

Heavy-metal-binding protein. Binds zinc, copper and nickel in a reversible manner. The polypeptide is Heavy metal-associated isoprenylated plant protein 7 (Arabidopsis thaliana (Mouse-ear cress)).